The sequence spans 154 residues: 6,7-dimethyl-8-ribityllumazine synthase (154 aa).

Residues F26, 60-62 (ALE), and 84-86 (CII) contribute to the 5-amino-6-(D-ribitylamino)uracil site. 89–90 (ET) contributes to the (2S)-2-hydroxy-3-oxobutyl phosphate binding site. Residue H92 is the Proton donor of the active site. N117 serves as a coordination point for 5-amino-6-(D-ribitylamino)uracil. R131 is a binding site for (2S)-2-hydroxy-3-oxobutyl phosphate.

Belongs to the DMRL synthase family.

The catalysed reaction is (2S)-2-hydroxy-3-oxobutyl phosphate + 5-amino-6-(D-ribitylamino)uracil = 6,7-dimethyl-8-(1-D-ribityl)lumazine + phosphate + 2 H2O + H(+). It functions in the pathway cofactor biosynthesis; riboflavin biosynthesis; riboflavin from 2-hydroxy-3-oxobutyl phosphate and 5-amino-6-(D-ribitylamino)uracil: step 1/2. Its function is as follows. Catalyzes the formation of 6,7-dimethyl-8-ribityllumazine by condensation of 5-amino-6-(D-ribitylamino)uracil with 3,4-dihydroxy-2-butanone 4-phosphate. This is the penultimate step in the biosynthesis of riboflavin. This Acidovorax ebreus (strain TPSY) (Diaphorobacter sp. (strain TPSY)) protein is 6,7-dimethyl-8-ribityllumazine synthase.